Consider the following 258-residue polypeptide: Thiazole synthase (258 aa).

Lysine 96 serves as the catalytic Schiff-base intermediate with DXP. 1-deoxy-D-xylulose 5-phosphate-binding positions include glycine 157, 183-184 (AG), and 205-206 (NT).

Belongs to the ThiG family. In terms of assembly, homotetramer. Forms heterodimers with either ThiH or ThiS.

It localises to the cytoplasm. The catalysed reaction is [ThiS sulfur-carrier protein]-C-terminal-Gly-aminoethanethioate + 2-iminoacetate + 1-deoxy-D-xylulose 5-phosphate = [ThiS sulfur-carrier protein]-C-terminal Gly-Gly + 2-[(2R,5Z)-2-carboxy-4-methylthiazol-5(2H)-ylidene]ethyl phosphate + 2 H2O + H(+). Its pathway is cofactor biosynthesis; thiamine diphosphate biosynthesis. Catalyzes the rearrangement of 1-deoxy-D-xylulose 5-phosphate (DXP) to produce the thiazole phosphate moiety of thiamine. Sulfur is provided by the thiocarboxylate moiety of the carrier protein ThiS. In vitro, sulfur can be provided by H(2)S. This is Thiazole synthase from Alkaliphilus metalliredigens (strain QYMF).